Reading from the N-terminus, the 273-residue chain is Formamidopyrimidine-DNA glycosylase (273 aa).

P2 serves as the catalytic Schiff-base intermediate with DNA. The Proton donor role is filled by E3. K60 functions as the Proton donor; for beta-elimination activity in the catalytic mechanism. DNA-binding residues include H94, R113, and R154. An FPG-type zinc finger spans residues 239–273 (NAYDREGQPCPRCGATIIKTVVAQRGTHYCPECQR). R263 serves as the catalytic Proton donor; for delta-elimination activity.

This sequence belongs to the FPG family. Monomer. Zn(2+) serves as cofactor.

It catalyses the reaction Hydrolysis of DNA containing ring-opened 7-methylguanine residues, releasing 2,6-diamino-4-hydroxy-5-(N-methyl)formamidopyrimidine.. The catalysed reaction is 2'-deoxyribonucleotide-(2'-deoxyribose 5'-phosphate)-2'-deoxyribonucleotide-DNA = a 3'-end 2'-deoxyribonucleotide-(2,3-dehydro-2,3-deoxyribose 5'-phosphate)-DNA + a 5'-end 5'-phospho-2'-deoxyribonucleoside-DNA + H(+). Involved in base excision repair of DNA damaged by oxidation or by mutagenic agents. Acts as a DNA glycosylase that recognizes and removes damaged bases. Has a preference for oxidized purines, such as 7,8-dihydro-8-oxoguanine (8-oxoG). Has AP (apurinic/apyrimidinic) lyase activity and introduces nicks in the DNA strand. Cleaves the DNA backbone by beta-delta elimination to generate a single-strand break at the site of the removed base with both 3'- and 5'-phosphates. This chain is Formamidopyrimidine-DNA glycosylase, found in Roseiflexus sp. (strain RS-1).